We begin with the raw amino-acid sequence, 41 residues long: Photosystem I reaction center subunit IX (41 aa).

The chain crosses the membrane as a helical span at residues 7-27; the sequence is YLSTAPVLATLWFGFLAGLLI.

The protein belongs to the PsaJ family.

It localises to the plastid. Its subcellular location is the chloroplast thylakoid membrane. May help in the organization of the PsaE and PsaF subunits. The chain is Photosystem I reaction center subunit IX from Physcomitrium patens (Spreading-leaved earth moss).